Here is a 419-residue protein sequence, read N- to C-terminus: F-box/LRR-repeat protein At1g67190 (419 aa).

The F-box domain occupies 1-48; the sequence is MDYLPVEVIGNILSRLGGARDVVIASATCRKWREACRKHLQTLSFNSA. LRR repeat units follow at residues 53 to 82, 96 to 124, 133 to 157, 158 to 183, 185 to 209, 245 to 272, 273 to 297, 301 to 326, and 356 to 381; these read YRDL…SIMM, WLMY…EICG, LAHN…LSLS, YVSI…ELVS, EIAM…YFDG, HFKL…DVNH, FTMV…RLWD, DDDD…SLSY, and INDV…IIYG.

The sequence is that of F-box/LRR-repeat protein At1g67190 from Arabidopsis thaliana (Mouse-ear cress).